We begin with the raw amino-acid sequence, 135 residues long: Phosphoribosyl-AMP cyclohydrolase (135 aa).

Mg(2+) is bound at residue Asp-78. Position 79 (Cys-79) interacts with Zn(2+). Asp-80 and Asp-82 together coordinate Mg(2+). Zn(2+) contacts are provided by Cys-96 and Cys-103.

The protein belongs to the PRA-CH family. In terms of assembly, homodimer. It depends on Mg(2+) as a cofactor. Zn(2+) is required as a cofactor.

Its subcellular location is the cytoplasm. It carries out the reaction 1-(5-phospho-beta-D-ribosyl)-5'-AMP + H2O = 1-(5-phospho-beta-D-ribosyl)-5-[(5-phospho-beta-D-ribosylamino)methylideneamino]imidazole-4-carboxamide. It participates in amino-acid biosynthesis; L-histidine biosynthesis; L-histidine from 5-phospho-alpha-D-ribose 1-diphosphate: step 3/9. Catalyzes the hydrolysis of the adenine ring of phosphoribosyl-AMP. This is Phosphoribosyl-AMP cyclohydrolase from Cupriavidus metallidurans (strain ATCC 43123 / DSM 2839 / NBRC 102507 / CH34) (Ralstonia metallidurans).